The sequence spans 236 residues: Eukaryotic translation initiation factor 3 subunit J (236 aa).

Disordered stretches follow at residues 1-88 and 188-236; these read MADD…LANM and SEKQ…DDFM. The span at 28–46 shows a compositional bias: acidic residues; sequence GEDDDEDVKESWEDEEEKK. Basic and acidic residues-rich tracts occupy residues 47–58, 68–88, and 188–197; these read DEEKPTKTEAPV, AKLEEQERLNEEEERKRLANM, and SEKQKMEKAN. 2 coiled-coil regions span residues 61–112 and 174–209; these read KPNK…LKSA and ADIKKVKMSVESLHSEKQKMEKANAKKSAAKAKGKV. The segment covering 201–210 has biased composition (basic residues); that stretch reads SAAKAKGKVS.

Belongs to the eIF-3 subunit J family. Component of the eukaryotic translation initiation factor 3 (eIF-3) complex. The eIF-3 complex interacts with pix.

The protein localises to the cytoplasm. Functionally, component of the eukaryotic translation initiation factor 3 (eIF-3) complex, which is involved in protein synthesis of a specialized repertoire of mRNAs and, together with other initiation factors, stimulates binding of mRNA and methionyl-tRNAi to the 40S ribosome. The eIF-3 complex specifically targets and initiates translation of a subset of mRNAs involved in cell proliferation. This Drosophila virilis (Fruit fly) protein is Eukaryotic translation initiation factor 3 subunit J.